We begin with the raw amino-acid sequence, 77 residues long: Omega-conotoxin-like 6 (77 aa).

An N-terminal signal peptide occupies residues 1 to 22 (MKLTCVVIIAVLLLTACQLITA). The propeptide occupies 23 to 50 (DDSRGVQKHRSLRSTTKVSKSTSCMEAG). Disulfide bonds link C46/C61, C53/C64, and C60/C71.

The protein belongs to the conotoxin O1 superfamily. In terms of tissue distribution, expressed by the venom duct.

The protein resides in the secreted. Its function is as follows. Omega-conotoxins act at presynaptic membranes, they bind and block voltage-gated calcium channels (Cav). The sequence is that of Omega-conotoxin-like 6 from Conus striatus (Striated cone).